The primary structure comprises 543 residues: Protein B602L (543 aa).

13 tandem repeats follow at residues 161–164 (CAST), 165–168 (CAST), 169–172 (CAST), 173–176 (CAST), 177–180 (CADT), 181–184 (NVDT), 185–188 (CTDT), 189–192 (CAST), 193–196 (CADT), 197–200 (NVDT), 201–204 (CAST), 205–208 (CADT), and 209–212 (CAST). A 13 X 4 AA tandem repeats of [CN]-[ATV]-[DS]-T region spans residues 161-212 (CASTCASTCASTCASTCADTNVDTCTDTCASTCADTNVDTCASTCADTCAST).

This sequence belongs to the asfivirus B602L family.

Its subcellular location is the host cytoplasm. In terms of biological role, plays an essential role in the assembly of the icosahedral capsid of the virus. Allows the assembly of 3 molecules of hexon protein p72 and formation of a thermostable trimer. This chain is Protein B602L, found in African swine fever virus (isolate Pig/Kenya/KEN-50/1950) (ASFV).